A 210-amino-acid polypeptide reads, in one-letter code: Ribosomal RNA large subunit methyltransferase E (210 aa).

The S-adenosyl-L-methionine site is built by glycine 61, tryptophan 63, aspartate 81, aspartate 97, and aspartate 122. The active-site Proton acceptor is lysine 162.

This sequence belongs to the class I-like SAM-binding methyltransferase superfamily. RNA methyltransferase RlmE family.

It localises to the cytoplasm. The catalysed reaction is uridine(2552) in 23S rRNA + S-adenosyl-L-methionine = 2'-O-methyluridine(2552) in 23S rRNA + S-adenosyl-L-homocysteine + H(+). Its function is as follows. Specifically methylates the uridine in position 2552 of 23S rRNA at the 2'-O position of the ribose in the fully assembled 50S ribosomal subunit. The protein is Ribosomal RNA large subunit methyltransferase E of Xanthomonas oryzae pv. oryzae (strain MAFF 311018).